Reading from the N-terminus, the 308-residue chain is Cilia- and flagella-associated protein 73 (308 aa).

2 coiled-coil regions span residues 34 to 143 (RLLE…LEPC) and 175 to 233 (AALR…WESK).

Belongs to the CFAP73 family.

The protein resides in the cytoplasm. Its subcellular location is the cytoskeleton. The protein localises to the cilium axoneme. Its function is as follows. May play a role in ciliary/flagellar motility by regulating the assembly and the activity of axonemal inner dynein arm. The chain is Cilia- and flagella-associated protein 73 from Homo sapiens (Human).